Reading from the N-terminus, the 339-residue chain is Protein RecA (339 aa).

Position 74–81 (74–81 (GPESSGKT)) interacts with ATP.

This sequence belongs to the RecA family.

It localises to the cytoplasm. Can catalyze the hydrolysis of ATP in the presence of single-stranded DNA, the ATP-dependent uptake of single-stranded DNA by duplex DNA, and the ATP-dependent hybridization of homologous single-stranded DNAs. It interacts with LexA causing its activation and leading to its autocatalytic cleavage. The polypeptide is Protein RecA (Phytoplasma mali (strain AT)).